A 1064-amino-acid chain; its full sequence is Valine--tRNA ligase, mitochondrial (1064 aa).

Residues 1–26 (MPHLPLASFRPPFWGLRHSRGLPRFH) constitute a mitochondrion transit peptide. Positions 25-65 (FHSVSTQSEPHGSPISRRNREAKQKRLREKQATLETDIAGE) are disordered. Residues 42 to 56 (RNREAKQKRLREKQA) are compositionally biased toward basic and acidic residues. The short motif at 146–156 (PNVTGSLHIGH) is the 'HIGH' region element. Positions 659-663 (KMSKS) match the 'KMSKS' region motif. Lysine 662 contributes to the ATP binding site.

This sequence belongs to the class-I aminoacyl-tRNA synthetase family.

The protein localises to the mitochondrion. It carries out the reaction tRNA(Val) + L-valine + ATP = L-valyl-tRNA(Val) + AMP + diphosphate. Its function is as follows. Catalyzes the attachment of valine to tRNA(Val) in a two-step reaction: valine is first activated by ATP to form Val-AMP and then transferred to the acceptor end of tRNA(Val). The chain is Valine--tRNA ligase, mitochondrial (VARS2) from Macaca mulatta (Rhesus macaque).